A 300-amino-acid chain; its full sequence is Ribosomal protein bS6--L-glutamate ligase (300 aa).

The ATP-grasp domain occupies 104–287 (MQLLARQGID…IAGKMIRWIE (184 aa)). Residues lysine 141, 178 to 179 (EY), aspartate 187, and 211 to 213 (RSN) each bind ATP. The Mg(2+) site is built by aspartate 248, glutamate 260, and asparagine 262. Residues aspartate 248, glutamate 260, and asparagine 262 each coordinate Mn(2+).

The protein belongs to the RimK family. The cofactor is Mg(2+). Requires Mn(2+) as cofactor.

In terms of biological role, an L-glutamate ligase that catalyzes the ATP-dependent post-translational addition of glutamate residues to the C-terminus of ribosomal protein bS6 (RpsF). Is also able to catalyze the synthesis of poly-alpha-glutamate in vitro, via ATP hydrolysis from unprotected glutamate as substrate. The number of glutamate residues added to either RpsF or to poly-alpha-glutamate changes with pH. The protein is Ribosomal protein bS6--L-glutamate ligase of Shigella boydii serotype 18 (strain CDC 3083-94 / BS512).